Reading from the N-terminus, the 724-residue chain is Actin-related protein 5 (724 aa).

3 disordered regions span residues 358–391 (QSLR…LMNV), 412–450 (TTAE…ESYL), and 467–488 (KKRL…IGRG). Residues 414–446 (AEGRLRARQKRNEEELEKEKRNQLEEERRRENP) are compositionally biased toward basic and acidic residues. At Ser-542 the chain carries Phosphoserine.

This sequence belongs to the actin family. ARP5 subfamily. Component of the INO80 chromatin-remodeling complex. Interacts with EEN. Expressed ubiquitously in seedlings, roots, leaves, buds, flowers and siliques.

Its subcellular location is the nucleus. It is found in the nucleoplasm. The protein localises to the cytoplasm. In terms of biological role, probable subunit of a chromatin-remodeling complex. Involved in DNA repair. Required for multicellular development of all organs. This Arabidopsis thaliana (Mouse-ear cress) protein is Actin-related protein 5.